The primary structure comprises 199 residues: V-type proton ATPase subunit E (199 aa).

The protein belongs to the V-ATPase E subunit family.

Functionally, produces ATP from ADP in the presence of a proton gradient across the membrane. This is V-type proton ATPase subunit E from Clostridium botulinum (strain Loch Maree / Type A3).